The following is a 400-amino-acid chain: Probable vacuolar protease A (400 aa).

The signal sequence occupies residues 1-18 (MKGSLLLAGATLLGCTSA). Residues 19 to 72 (KLHSLKLKKVSLKEQLEHADIDVQIKSLGQKYMGIRPEQHEQQMFKEQTPIEAE) constitute a propeptide, activation peptide. The 311-residue stretch at 87–397 (YFSEISIGTP…DLGKGTVGLA (311 aa)) folds into the Peptidase A1 domain. Asp105 is an active-site residue. A disulfide bond links Cys118 and Cys123. N-linked (GlcNAc...) asparagine glycosylation is present at Asn140. Residue Asp289 is part of the active site. A disulfide bridge links Cys323 with Cys356. N-linked (GlcNAc...) asparagine glycosylation occurs at Asn340.

Belongs to the peptidase A1 family.

Its subcellular location is the vacuole lumen. It is found in the secreted. The catalysed reaction is Hydrolysis of proteins with broad specificity for peptide bonds. Cleaves -Leu-Leu-|-Val-Tyr- bond in a synthetic substrate. Does not act on esters of Tyr or Arg.. Vacuolar aspartic endopeptidase which is probably also secreted and contributes to virulence. In Trichophyton verrucosum (strain HKI 0517), this protein is Probable vacuolar protease A (PEP2).